Consider the following 160-residue polypeptide: Transcriptional regulator MraZ (160 aa).

2 SpoVT-AbrB domains span residues 5-50 and 93-136; these read KFDT…GDQV and AVEC…SQAV.

It belongs to the MraZ family. Forms oligomers.

It localises to the cytoplasm. Its subcellular location is the nucleoid. The polypeptide is Transcriptional regulator MraZ (Geobacter sp. (strain M21)).